The following is a 90-amino-acid chain: Glycine and tyrosine-rich protein (90 aa).

An N-terminal signal peptide occupies residues 1-21; the sequence is MRRSVLVVFLVLAVTNVAVEA.

As to expression, prismatic layer of shell (at protein level).

It localises to the secreted. This chain is Glycine and tyrosine-rich protein, found in Pinctada maxima (Silver-lipped pearl oyster).